A 418-amino-acid polypeptide reads, in one-letter code: Serpin H1 (418 aa).

The first 18 residues, M1 to A18, serve as a signal peptide directing secretion. The residue at position 94 (K94) is an N6-succinyllysine. N-linked (GlcNAc...) asparagine glycosylation is found at N120 and N125. Residue S141 is modified to Phosphoserine. The residue at position 207 (K207) is an N6-acetyllysine. An N6-succinyllysine modification is found at K296. Position 319 is an N6-acetyllysine (K319). The Prevents secretion from ER motif lies at R415–L418.

It belongs to the serpin family.

The protein resides in the endoplasmic reticulum lumen. Functionally, binds specifically to collagen. Could be involved as a chaperone in the biosynthetic pathway of collagen. The sequence is that of Serpin H1 (SERPINH1) from Bos taurus (Bovine).